A 552-amino-acid chain; its full sequence is Cation transporter HKT1;1 (552 aa).

Residues methionine 1–serine 70 are Cytoplasmic-facing. 2 consecutive transmembrane segments (helical) span residues asparagine 71–leucine 91 and leucine 133–leucine 153. The Cytoplasmic segment spans residues tyrosine 154–arginine 221. The next 2 membrane-spanning stretches (helical) occupy residues isoleucine 222–phenylalanine 242 and valine 291–leucine 311. The Cytoplasmic segment spans residues arginine 312–serine 348. The next 2 membrane-spanning stretches (helical) occupy residues valine 349–phenylalanine 369 and isoleucine 402–leucine 422. Topologically, residues proline 423–arginine 448 are cytoplasmic. A run of 2 helical transmembrane segments spans residues alanine 449–isoleucine 471 and glycine 524–glycine 544. Residues arginine 545 to lysine 552 lie on the Cytoplasmic side of the membrane.

It belongs to the TrkH potassium transport family. HKT (TC 2.A.38.3) subfamily. In terms of tissue distribution, expressed in shoots. In roots, expressed in epidermis, exodermis, cortex, and sieve elements and companion cells of phloem. In mature leaves, expressed in large highly vacuolated cells of the adaxial epidermis, phloem and xylem.

Its subcellular location is the membrane. The enzyme catalyses Na(+)(in) = Na(+)(out). Functions as a low-affinity sodium transporter. The polypeptide is Cation transporter HKT1;1 (Oryza sativa subsp. japonica (Rice)).